The chain runs to 150 residues: Transcriptional repressor NrdR (150 aa).

The segment at 3-34 is a zinc-finger region; it reads CPFCAFADSKVVDSRPDKEGSTIRRRRECESC. The 91-residue stretch at 49-139 folds into the ATP-cone domain; it reads PLVIKKDGRR…VYRSFKDITE (91 aa).

It belongs to the NrdR family. Zn(2+) serves as cofactor.

In terms of biological role, negatively regulates transcription of bacterial ribonucleotide reductase nrd genes and operons by binding to NrdR-boxes. In Geotalea daltonii (strain DSM 22248 / JCM 15807 / FRC-32) (Geobacter daltonii), this protein is Transcriptional repressor NrdR.